The following is a 103-amino-acid chain: O2 contryphan Vc1 (103 aa).

The N-terminal stretch at 1–23 is a signal peptide; sequence MGKLTILFLVAAALLSTQVMVQG. A propeptide spanning residues 24-67 is cleaved from the precursor; it reads DGAHERTEAEEPQHHGAKRQDGTGGYPVDDVDMMQRIFRTPLKR. A compositionally biased stretch (basic and acidic residues) spans 25–44; the sequence is GAHERTEAEEPQHHGAKRQD. Positions 25 to 50 are disordered; it reads GAHERTEAEEPQHHGAKRQDGTGGYP. Position 68 is a pyrrolidone carboxylic acid (Q68). The cysteines at positions 70 and 83 are disulfide-linked. Positions 99–103 are excised as a propeptide; the sequence is RRGRQ.

It belongs to the O2 superfamily. In terms of processing, pyrrolidone carboxylic acid at position 1 has no significant effect on the structure of contryphan-Vc1. As to expression, expressed by the venom gland.

It is found in the secreted. Functionally, unknown. Intracranial injection of the peptide into mice does not produce toxic effects. In addition, the peptide does not produce any observable changes to normal or depolarization-induced intracellular calcium levels in mouse dorsal root ganglion cells. This is O2 contryphan Vc1 from Conus victoriae (Queen Victoria cone).